Here is a 236-residue protein sequence, read N- to C-terminus: Small ribosomal subunit protein uS2c (236 aa).

It belongs to the universal ribosomal protein uS2 family.

It is found in the plastid. The protein resides in the chloroplast. The protein is Small ribosomal subunit protein uS2c (rps2) of Oryza nivara (Indian wild rice).